The primary structure comprises 87 residues: U3-theraphotoxin-Hhn1a 13 (87 aa).

Residues 1 to 24 (MVNMKASMFLTSAGLVPLFVVCYA) form the signal peptide. A propeptide spanning residues 25 to 52 (SESEEKEFPKEMLSSIFAVDNDFKQEER) is cleaved from the precursor. 3 disulfide bridges follow: cysteine 54-cysteine 67, cysteine 61-cysteine 72, and cysteine 66-cysteine 79.

Belongs to the neurotoxin 10 (Hwtx-1) family. 51 (Hntx-8) subfamily. Hntx-8 sub-subfamily. Expressed by the venom gland.

The protein resides in the secreted. Functionally, ion channel inhibitor. The sequence is that of U3-theraphotoxin-Hhn1a 13 from Cyriopagopus hainanus (Chinese bird spider).